Reading from the N-terminus, the 107-residue chain is Pro-corazonin (107 aa).

An N-terminal signal peptide occupies residues 1 to 21 (MVNSQILILFILSLTITIVMC). Q22 is subject to Pyrrolidone carboxylic acid. Position 32 is an asparagine amide (N32). The propeptide occupies 88-107 (SFSENMINDHRQPAPTNNNY).

This sequence belongs to the corazonin family. In the adult brain, expressed in four neurons of the lateral protocerebrum project axons towards the retrocerebral complex.

The protein localises to the secreted. Cardioactive peptide. Corazonin is probably involved in the physiological regulation of the heart beat. The chain is Pro-corazonin from Apis mellifera (Honeybee).